The following is a 107-amino-acid chain: uncharacterized protein (107 aa).

The signal sequence occupies residues 1–20 (MYIKGRLIFFFVVLVIALCS).

This is an uncharacterized protein from Listeria monocytogenes serovar 1/2a (strain ATCC BAA-679 / EGD-e).